The following is a 569-amino-acid chain: Dihydroxy-acid dehydratase (569 aa).

Cysteine 61 lines the [2Fe-2S] cluster pocket. Aspartate 93 is a binding site for Mg(2+). [2Fe-2S] cluster is bound at residue cysteine 134. Mg(2+)-binding residues include aspartate 135 and lysine 136. Lysine 136 carries the post-translational modification N6-carboxylysine. Cysteine 211 contributes to the [2Fe-2S] cluster binding site. Glutamate 462 is a binding site for Mg(2+). The active-site Proton acceptor is serine 488.

The protein belongs to the IlvD/Edd family. As to quaternary structure, homodimer. It depends on [2Fe-2S] cluster as a cofactor. The cofactor is Mg(2+).

It catalyses the reaction (2R)-2,3-dihydroxy-3-methylbutanoate = 3-methyl-2-oxobutanoate + H2O. The enzyme catalyses (2R,3R)-2,3-dihydroxy-3-methylpentanoate = (S)-3-methyl-2-oxopentanoate + H2O. It participates in amino-acid biosynthesis; L-isoleucine biosynthesis; L-isoleucine from 2-oxobutanoate: step 3/4. It functions in the pathway amino-acid biosynthesis; L-valine biosynthesis; L-valine from pyruvate: step 3/4. Its function is as follows. Functions in the biosynthesis of branched-chain amino acids. Catalyzes the dehydration of (2R,3R)-2,3-dihydroxy-3-methylpentanoate (2,3-dihydroxy-3-methylvalerate) into 2-oxo-3-methylpentanoate (2-oxo-3-methylvalerate) and of (2R)-2,3-dihydroxy-3-methylbutanoate (2,3-dihydroxyisovalerate) into 2-oxo-3-methylbutanoate (2-oxoisovalerate), the penultimate precursor to L-isoleucine and L-valine, respectively. The polypeptide is Dihydroxy-acid dehydratase (Tropheryma whipplei (strain TW08/27) (Whipple's bacillus)).